Consider the following 518-residue polypeptide: Tropomyosin-1, isoforms 33/34 (518 aa).

A coiled-coil region spans residues 14-267 (DKDGALERAL…DDLIVEKERY (254 aa)). 2 disordered regions span residues 101 to 125 (RSEERLGSATAKLSEASQAADESER) and 288 to 518 (FWNP…APPA). Over residues 293–305 (NPKPPTPKLPTPT) the composition is skewed to pro residues. Residues 318 to 348 (AAEAAAAAEAEAAEAAAAAGEAGPDGAPAAP) are compositionally biased toward low complexity. Pro residues-rich tracts occupy residues 357 to 374 (EPTPPKEPTPPPPPPPPF) and 394 to 405 (EPPPPGSEPEPV). Residues 406–518 (PAAEGEAAPA…AAAEGEAPPA (113 aa)) show a composition bias toward low complexity.

The protein belongs to the tropomyosin family. Homodimer. Both isoforms are only expressed in indirect flight muscles.

The protein resides in the cytoplasm. It is found in the cytoskeleton. Tropomyosin, in association with the troponin complex, plays a central role in the calcium dependent regulation of muscle contraction. The chain is Tropomyosin-1, isoforms 33/34 (Tm1) from Drosophila melanogaster (Fruit fly).